Reading from the N-terminus, the 738-residue chain is AP-4 complex subunit beta-1 (738 aa).

The tract at residues 534-600 (CSPKSDPSLG…NASFATSGHL (67 aa)) is hinge. The tract at residues 601–738 (ISEENKEGAQ…VIGTVGDIKS (138 aa)) is ear; mediates interaction with TEPSIN.

The protein belongs to the adaptor complexes large subunit family. Adaptor protein complex 4 (AP-4) is a heterotetramer composed of two large adaptins (epsilon-type subunit AP4E1 and beta-type subunit AP4B1), a medium adaptin (mu-type subunit AP4M1) and a small adaptin (sigma-type AP4S1). Interacts with TEPSIN; this interaction requires the presence of a functional AP-4 complex. Interacts with GRIA2; probably indirect it mediates the somatodendritic localization of GRIA2 in neurons.

The protein resides in the golgi apparatus. It localises to the trans-Golgi network membrane. Functionally, component of the adaptor protein complex 4 (AP-4). Adaptor protein complexes are vesicle coat components involved both in vesicle formation and cargo selection. They control the vesicular transport of proteins in different trafficking pathways. AP-4 forms a non clathrin-associated coat on vesicles departing the trans-Golgi network (TGN) and may be involved in the targeting of proteins from the trans-Golgi network (TGN) to the endosomal-lysosomal system. It is also involved in protein sorting to the basolateral membrane in epithelial cells and the proper asymmetric localization of somatodendritic proteins in neurons. AP-4 is involved in the recognition and binding of tyrosine-based sorting signals found in the cytoplasmic part of cargos, but may also recognize other types of sorting signal. This is AP-4 complex subunit beta-1 from Mus musculus (Mouse).